The chain runs to 399 residues: Elongation factor Tu (399 aa).

Residues 10–209 (KPHVNIGTIG…EVDAYIPTPK (200 aa)) form the tr-type G domain. A G1 region spans residues 19–26 (GHVDHGKT). 19-26 (GHVDHGKT) is a GTP binding site. Mg(2+) is bound at residue Thr26. The interval 60-64 (GITIA) is G2. The interval 81–84 (DCPG) is G3. GTP contacts are provided by residues 81–85 (DCPGH) and 136–139 (NKQD). Positions 136 to 139 (NKQD) are G4. The segment at 174-176 (SAL) is G5.

This sequence belongs to the TRAFAC class translation factor GTPase superfamily. Classic translation factor GTPase family. EF-Tu/EF-1A subfamily. In terms of assembly, monomer.

It is found in the cytoplasm. The catalysed reaction is GTP + H2O = GDP + phosphate + H(+). GTP hydrolase that promotes the GTP-dependent binding of aminoacyl-tRNA to the A-site of ribosomes during protein biosynthesis. This chain is Elongation factor Tu, found in Helicobacter pylori (strain P12).